Here is a 156-residue protein sequence, read N- to C-terminus: RING finger protein 224 (156 aa).

Residues 24-71 form an RING-type zinc finger; the sequence is CIICCSAYDLSGHLPRRLYCGHTFCQACVRRLDTPAPEQRWIPCPQCR.

The chain is RING finger protein 224 (RNF224) from Homo sapiens (Human).